The chain runs to 412 residues: Glutamate-pyruvate aminotransferase AlaC (412 aa).

Lys244 is modified (N6-(pyridoxal phosphate)lysine).

Belongs to the class-I pyridoxal-phosphate-dependent aminotransferase family. As to quaternary structure, homodimer. Requires pyridoxal 5'-phosphate as cofactor.

The protein localises to the cytoplasm. The enzyme catalyses L-alanine + 2-oxoglutarate = pyruvate + L-glutamate. Its pathway is amino-acid biosynthesis; L-alanine biosynthesis. Involved in the biosynthesis of alanine. Catalyzes the transamination of pyruvate by glutamate, leading to the formation of L-alanine and 2-oxoglutarate. Is also able to catalyze the reverse reaction. The polypeptide is Glutamate-pyruvate aminotransferase AlaC (Escherichia coli (strain K12)).